Here is a 238-residue protein sequence, read N- to C-terminus: Lactate utilization protein A (238 aa).

The protein belongs to the LutA/YkgE family.

Its function is as follows. Is involved in L-lactate degradation and allows cells to grow with lactate as the sole carbon source. The sequence is that of Lactate utilization protein A from Geobacillus sp. (strain WCH70).